The following is an 88-amino-acid chain: Small ribosomal subunit protein uS19 (88 aa).

It belongs to the universal ribosomal protein uS19 family.

Its function is as follows. Protein S19 forms a complex with S13 that binds strongly to the 16S ribosomal RNA. The sequence is that of Small ribosomal subunit protein uS19 (rpsS) from Chlamydia muridarum (strain MoPn / Nigg).